The primary structure comprises 156 residues: Small ribosomal subunit protein uS7 (156 aa).

This sequence belongs to the universal ribosomal protein uS7 family. As to quaternary structure, part of the 30S ribosomal subunit. Contacts proteins S9 and S11.

Its function is as follows. One of the primary rRNA binding proteins, it binds directly to 16S rRNA where it nucleates assembly of the head domain of the 30S subunit. Is located at the subunit interface close to the decoding center, probably blocks exit of the E-site tRNA. This chain is Small ribosomal subunit protein uS7, found in Mycoplasma mobile (strain ATCC 43663 / 163K / NCTC 11711) (Mesomycoplasma mobile).